Consider the following 705-residue polypeptide: Crooked neck-like protein 1 (705 aa).

HAT repeat units follow at residues 55–87, 89–121, 123–155, 157–188, 190–221, 223–258, 260–294, 304–336, 338–372, 382–418, 420–451, 453–485, 487–521, and 523–554; these read DYRLRKRQQYESLLGRNRKTAAIYIKYAAWEES, KDLTRARSVFERFLDIDHRIPTVWIKYAEMEMK, KNINLARNIWDRAVCLLPRVSQLWFKYTFMEDM, GNYPAARAIFERWMQWKPEPQAWNSYLKFEQR, KLFENTRLIFEKYILVHPYIKTWIKYTKFEER, GNIENARTIFQRAIEFLGEDGNDEQLFIAFAKFEEK, KEIERARVIYKYAIDHVPKSRAKDLFDTFTNFEKQ, VVLGKKRFQYEEEIKKNSKNYDIWFDYLKMEEI, GEIEKTREIYERSIGNLPPTNEKKHWKRYIYLWIN, KDMERARSVYSECIKLIPHKEFSFSKIWILYANFEIR, LNLDKARLIYGQAIGRNPKSKIFDQYIHLEIE, GNFDRVRTLYEKYLEIMPDNCDAWCKFAQLETE, GETVRARAIFELAIQQPNLDRPEVVWKDFIDSEIQ, and KQFDFVKQLYRKLLEKTNHVKVWIGFIKFVHS. Residues 559–591 form a disordered region; sequence QQQKQRQQQQEEDGDSNTTKKDGGDDDNNDDIN. One copy of the HAT 15 repeat lies at 597-629; it reads IFIEAHKSLSNSDKEERLLLLESWKEFEQTFGN.

Belongs to the crooked-neck family. Identified in the spliceosome C complex.

It is found in the nucleus. The protein resides in the nucleus speckle. Involved in pre-mRNA splicing process. This is Crooked neck-like protein 1 (crnkl1) from Dictyostelium discoideum (Social amoeba).